The primary structure comprises 1269 residues: MPAERKKSASMEEKESLLNNKEKDCSERRPVSSKEKPRDDLKVTAKKEVSKVPEDKKKRLEEDKRKKEDKERKKKEEEKVKAEEELKKKEEEEKKKQEEEERKKQEEQAKRQQEEAAAQLKEKEESLQLHQEAWERHQLRKELRSKNQNAPDNRPEENFFSRLDSSLKKNTAFVKKLKTITEQQRDSLSHDFNGLNLSKYIAEAVASIVEAKLKLSDVNCAAHLCSLFHQRYSDFAPSLLQVWKKHFEARKEEKTPNITKLRTDLRFIAELTIVGIFTDKEGLSLIYEQLKSIINADRESHTHVSVVISFCRHCGDDIAGLVPRKVKSAAEKFNLSFPPSEIISPEKQQPFQNLLKEYFTSLTKHLKRDHRELQNTERQNRRILHSKGELSEDRHKQYEEFAMSYQKLLANSQSLADLLDENMPDLPQDKPTPEEHGPGIDIFTPGKPGEYDLEGGIWEDEDARNFYENLIDLKAFVPAILFKDNEKSQNKDSNKDDSKEAKEPKDNKEASSPDDLELELENLEINDDTLELEGADEAEDLTKKLLDEQEQEDEEASTGSHLKLIVDAFLQQLPNCVNRDLIDKAAMDFCMNMNTKANRKKLVRALFIVPRQRLDLLPFYARLVATLHPCMSDVAEDLCSMLRGDFRFHVRKKDQINIETKNKTVRFIGELTKFKMFTKNDTLHCLKMLLSDFSHHHIEMACTLLETCGRFLFRSPESHLRTSVLLEQMMRKKQAMHLDARYVTMVENAYYYCNPPPAEKTVRKKRPPLQEYVRKLLYKDLSKVTTEKVLRQMRKLPWQDQEVKDYVICCMINIWNVKYNSIHCVANLLAGLVLYQEDVGIHVVDGVLEDIRLGMEVNQPKFNQRRISSAKFLGELYNYRMVESAVIFRTLYSFTSFGVNPDGSPSSLDPPEHLFRIRLVCTILDTCGQYFDRGSSKRKLDCFLVYFQRYVWWKKSLEVWTKDHPFPIDIDYMISDTLELLRPKIKLCNSLEESIRQVQDLEREFLIKLGLVNDKESKDSMTEGENLEEDEEEEEGGAETEEQSGNESEVNEPEEEEGSEEEEEGEEEEEENTDYLTDSNKENETDEENAEVMIKGGGLKHVPCVEDEDFIQALDKMMLENLQQRSGESVKVHQLDVAIPLHLKSQLRKGPPLGGGEGETESADTMPFVMLTRKGNKQQFKILNVPMSSQLAANHWNQQQAEQEERMRMKKLTLDINERQEQEDYQEMLQSLAQRPAPANTNRERRPRYQHPKGAPNADLIFKTGGRRR.

Disordered regions lie at residues 1-125 and 143-162; these read MPAE…EKEE and LRSK…FFSR. Positions 57–133 form a coiled coil; the sequence is KKRLEEDKRK…EESLQLHQEA (77 aa). The sufficient for interaction with UPF1 stretch occupies residues 94–132; it reads KKKQEEEERKKQEEQAKRQQEEAAAQLKEKEESLQLHQE. Positions 168–396 constitute an MIF4G 1 domain; that stretch reads KKNTAFVKKL…KGELSEDRHK (229 aa). Disordered stretches follow at residues 422 to 444 and 487 to 518; these read NMPD…DIFT and KSQN…DLEL. Basic and acidic residues-rich tracts occupy residues 427–438 and 487–511; these read PQDKPTPEEHGP and KSQN…KEAS. 2 consecutive MIF4G domains span residues 571–755 and 774–984; these read QQLP…YCNP and RKLL…LRPK. The tract at residues 709 to 926 is sufficient for interaction with UPF3A and UPF3B; that stretch reads GRFLFRSPES…IRLVCTILDT (218 aa). Positions 755–1269 are sufficient for interaction with EIF4A1 and EIF1; that stretch reads PPPAEKTVRK…LIFKTGGRRR (515 aa). Residues 837–857 are binds to UPF3B; the sequence is EDVGIHVVDGVLEDIRLGMEV. Positions 1017-1090 are disordered; sequence SKDSMTEGEN…KENETDEENA (74 aa). A compositionally biased stretch (acidic residues) spans 1025–1073; that stretch reads ENLEEDEEEEEGGAETEEQSGNESEVNEPEEEEGSEEEEEGEEEEEENT. Residues 1081 to 1269 are sufficient for interaction with UPF1 C-terminus; sequence KENETDEENA…LIFKTGGRRR (189 aa). Residue threonine 1085 is modified to Phosphothreonine. Interaction with UPF1 stretches follow at residues 1102 to 1126 and 1164 to 1204; these read VPCV…QQRS and DTMP…AEQE. The tract at residues 1102 to 1195 is necessary for interaction with UPF1; sequence VPCVEDEDFI…PMSSQLAANH (94 aa). Positions 1218–1269 are disordered; the sequence is ERQEQEDYQEMLQSLAQRPAPANTNRERRPRYQHPKGAPNADLIFKTGGRRR.

As to quaternary structure, found in a post-splicing messenger ribonucleoprotein (mRNP) complex. Associates with the exon junction complex (EJC). Interacts with SMG1, EST1A, UPF3A, UPF3B, EIF4A1 and EIF1. Interacts with UPF1; interaction is promoted by TDRD6. Interacts with DDX4. Localized in male germ cells.

It localises to the cytoplasm. Its subcellular location is the perinuclear region. Functionally, involved in nonsense-mediated decay (NMD) of mRNAs containing premature stop codons by associating with the nuclear exon junction complex (EJC). Recruited by UPF3B associated with the EJC core at the cytoplasmic side of the nuclear envelope and the subsequent formation of an UPF1-UPF2-UPF3 surveillance complex (including UPF1 bound to release factors at the stalled ribosome) is believed to activate NMD. In cooperation with UPF3B stimulates both ATPase and RNA helicase activities of UPF1. Binds spliced mRNA. This chain is Regulator of nonsense transcripts 2, found in Mus musculus (Mouse).